We begin with the raw amino-acid sequence, 398 residues long: MAKLTVKDVDLKGKKVLVRVDFNVPLKDGVITNDNRITAALPTIKYIIEQGGRAILFSHLGRVKEEADKEGKSLAPVAADLAAKLGQDVVFPGVTRGSKLEEAINALEDGQVLLVENTRFEDVDGKKESKNDEELGKYWASLGDGIFVNDAFGTAHRAHASNVGISANVEKAVAGFLLENEIAYIQEAVETPERPFVAILGGSKVSDKIGVIENLLEKADKVLIGGGMTYTFYKAQGIEIGNSLVEEDKLDVAKDLLEKSNGKLILPVDSKEANAFAGYTEVRDTEGEAVSKGFLGLDIGPKSIAEFDQALTGAKTVVWNGPMGVFENPDFQAGTIGVMDAIVKQPGVKSIIGGGDSAAAAINLGRADKFSWISTGGGASMELLEGKVLPGLAALTEK.

Residues 21 to 23, Arg-36, 59 to 62, Arg-119, and Arg-157 each bind substrate; these read DFN and HLGR. ATP is bound by residues Lys-208, Gly-296, Glu-327, and 354–357; that span reads GGDS.

The protein belongs to the phosphoglycerate kinase family. Monomer.

Its subcellular location is the cytoplasm. The catalysed reaction is (2R)-3-phosphoglycerate + ATP = (2R)-3-phospho-glyceroyl phosphate + ADP. It functions in the pathway carbohydrate degradation; glycolysis; pyruvate from D-glyceraldehyde 3-phosphate: step 2/5. This is Phosphoglycerate kinase from Streptococcus pyogenes serotype M18 (strain MGAS8232).